A 767-amino-acid chain; its full sequence is Protein NLP3 (767 aa).

Disordered regions lie at residues 462–494, 590–622, and 646–672; these read ATPP…RKTK, INPT…CSSE, and HEDQ…KAKD. One can recognise an RWP-RK domain in the interval 482 to 566; that stretch reads SASSLENRKR…MDSVEGVQGS (85 aa). Residues 485-506 adopt a coiled-coil conformation; that stretch reads SLENRKRKTKAEKDITLDTLRQ. Low complexity-rich tracts occupy residues 604–622 and 655–667; these read PSSS…CSSE and TSSL…ATTP. The 87-residue stretch at 673-759 folds into the PB1 domain; sequence GMKVKAMFGD…ETIRILVHHP (87 aa).

The protein localises to the nucleus. Its function is as follows. Probable transcription factor. The polypeptide is Protein NLP3 (NLP3) (Arabidopsis thaliana (Mouse-ear cress)).